A 525-amino-acid polypeptide reads, in one-letter code: Calcium uptake protein 1 homolog, mitochondrial (525 aa).

Residues 109-146 (ADAGQRPSSAADVNGEDKSSESESEDSEDEEAGSDLHL) are disordered. Acidic residues predominate over residues 130 to 141 (SESEDSEDEEAG). EF-hand domains lie at 268 to 303 (ISRRHFEIAFRMFDLNGDGDVDCEEFEMVATLVRQQ) and 459 to 494 (LSDHVVDVVFTIFDENNDNQLSNKEFISVMKNRVQR). Residues Asp281, Asn283, Asp285, Asp287, Glu292, Asp472, Asn474, Asp476, Gln478, and Glu483 each coordinate Ca(2+).

It belongs to the MICU1 family. MICU1 subfamily.

It is found in the mitochondrion intermembrane space. The protein resides in the mitochondrion inner membrane. Calcium sensor of the mitochondrial calcium uniporter (MCU) channel, which senses calcium level via its EF-hand domains. At low calcium levels, MICU1 occludes the pore of the MCU channel, preventing mitochondrial calcium uptake. At higher calcium levels, calcium-binding to MICU1 induces a conformational change that weakens MCU-MICU1 interactions and moves MICU1 away from the pore, allowing calcium permeation through the MCU channel. Also required to protect against manganese toxicity by preventing manganese uptake by MCU. During development, required in alpha/beta or gamma mushroom body neurons to support olfactory intermediate-term memory in the adult. This chain is Calcium uptake protein 1 homolog, mitochondrial, found in Drosophila melanogaster (Fruit fly).